A 417-amino-acid polypeptide reads, in one-letter code: DNA primase small subunit (417 aa).

The residue at position 1 (methionine 1) is an N-acetylmethionine. Active-site residues include glutamate 44, aspartate 109, and aspartate 111. The Mg(2+) site is built by aspartate 109 and aspartate 111. Mn(2+) is bound by residues aspartate 109 and aspartate 111. 109–111 is a binding site for a ribonucleoside 5'-triphosphate; the sequence is DID. Residues cysteine 121, cysteine 122, cysteine 128, and cysteine 131 each coordinate Zn(2+). The Zinc knuckle motif motif lies at 121–131; that stretch reads CCSSADICSKC. 160–166 contributes to the a ribonucleoside 5'-triphosphate binding site; it reads SGRRGVH. A Mg(2+)-binding site is contributed by aspartate 305. Residue aspartate 305 coordinates Mn(2+). A ribonucleoside 5'-triphosphate-binding positions include 314–317 and histidine 323; that span reads HLLK.

This sequence belongs to the eukaryotic-type primase small subunit family. Heterodimer of a catalytic subunit PRIM1 and a regulatory subunit PRIM2, also known as the DNA primase complex. Interacts with PRIM2/p58 (via C-terminus). Component of the alpha DNA polymerase complex (also known as the alpha DNA polymerase-primase complex) consisting of four subunits: the catalytic subunit POLA1, the regulatory subunit POLA2, and the primase complex subunits PRIM1 and PRIM2 respectively. Within the complex, POLA1 directly interacts with PRIM2. Mg(2+) serves as cofactor. The cofactor is Mn(2+).

It carries out the reaction ssDNA + n NTP = ssDNA/pppN(pN)n-1 hybrid + (n-1) diphosphate.. With respect to regulation, the presence of the regulatory subunit PRIM2/p58 accelerates the kinetics of initiation and primer extension. In terms of biological role, catalytic subunit of the DNA primase complex and component of the DNA polymerase alpha complex (also known as the alpha DNA polymerase-primase complex) which play an essential role in the initiation of DNA synthesis. During the S phase of the cell cycle, the DNA polymerase alpha complex (composed of a catalytic subunit POLA1, an accessory subunit POLA2 and two primase subunits, the catalytic subunit PRIM1 and the regulatory subunit PRIM2) is recruited to DNA at the replicative forks via direct interactions with MCM10 and WDHD1. The primase subunit of the polymerase alpha complex initiates DNA synthesis by oligomerising short RNA primers on both leading and lagging strands. These primers are initially extended by the polymerase alpha catalytic subunit and subsequently transferred to polymerase delta and polymerase epsilon for processive synthesis on the lagging and leading strand, respectively. In the primase complex, both subunits are necessary for the initial di-nucleotide formation, but the extension of the primer depends only on the catalytic subunit. Can add both ribo- and deoxynucleotides during elongation of the primers. Synthesizes 9-mer RNA primers (also known as the 'unit length' RNA primers). Incorporates only ribonucleotides in the presence of ribo- and deoxy-nucleotide triphosphates (rNTPs, dNTPs). Requires template thymine or cytidine to start the RNA primer synthesis, with an adenine or guanine at its 5'-end. Binds single stranded DNA. This chain is DNA primase small subunit (Prim1), found in Mus musculus (Mouse).